Reading from the N-terminus, the 319-residue chain is MIFFTFEHLFNHISFSIVSIVITIHLITLVVNKIVELDDSLEKGMILTFSCITGLLVIRWIFAGHFPLSDLYESLIFLSWSFYIIHMIPYFKNKKLSAITAPGAIFTQGFATSGFFTQMKQSTILVPALQSQWLMMHVSMMILAYAALLCGSLLSVALLVITFQNNISLFGKRKLLLNESLFIDKIQYVNEKNNILQGTYLFSLINFYRYQLIEQLDRWSSRVISLGFLFLTMGILSGAVWANEAWGSYWNWDPKETWAFITWTIFAIYLHIKTNINLKSENSAIVASIGFLIIWICYFGVNLLGIGLHSYGSFILKST.

The next 8 membrane-spanning stretches (helical) occupy residues phenylalanine 15–valine 35, glycine 44–glycine 64, leucine 71–phenylalanine 91, leucine 96–phenylalanine 116, methionine 141–isoleucine 161, valine 223–asparagine 243, tryptophan 258–leucine 278, and alanine 284–leucine 304.

The protein belongs to the CcmF/CycK/Ccl1/NrfE/CcsA family. May interact with Ccs1.

It is found in the plastid. The protein localises to the chloroplast thylakoid membrane. In terms of biological role, required during biogenesis of c-type cytochromes (cytochrome c6 and cytochrome f) at the step of heme attachment. This is Cytochrome c biogenesis protein CcsA from Fagopyrum esculentum subsp. ancestrale (Wild buckwheat).